Reading from the N-terminus, the 380-residue chain is Homoserine O-acetyltransferase (380 aa).

Positions 70 to 366 (NAVLVFHALT…SPHGHDAFLI (297 aa)) constitute an AB hydrolase-1 domain. Serine 186 serves as the catalytic Nucleophile. Substrate is bound at residue arginine 250. Residues aspartate 333 and histidine 361 contribute to the active site. Aspartate 362 is a substrate binding site.

Belongs to the AB hydrolase superfamily. MetX family. In terms of assembly, homodimer.

It localises to the cytoplasm. The enzyme catalyses L-homoserine + acetyl-CoA = O-acetyl-L-homoserine + CoA. It functions in the pathway amino-acid biosynthesis; L-methionine biosynthesis via de novo pathway; O-acetyl-L-homoserine from L-homoserine: step 1/1. In terms of biological role, transfers an acetyl group from acetyl-CoA to L-homoserine, forming acetyl-L-homoserine. The sequence is that of Homoserine O-acetyltransferase from Thermus thermophilus (strain ATCC BAA-163 / DSM 7039 / HB27).